Consider the following 136-residue polypeptide: uncharacterized protein (136 aa).

Disordered stretches follow at residues 23–44 (QESL…KEDN) and 56–95 (DGVI…ESAR). The segment covering 61 to 79 (SEEGCSSSGEKENSGLCSE) has biased composition (low complexity). Residues 80–91 (ESSEEDPEEAEE) show a composition bias toward acidic residues.

This is an uncharacterized protein from Saccharomyces cerevisiae (strain ATCC 204508 / S288c) (Baker's yeast).